The following is a 371-amino-acid chain: Aspartate-semialdehyde dehydrogenase (371 aa).

Residues 9–12 (RGMV), 37–38 (TS), and Gln73 each bind NADP(+). Arg102 lines the phosphate pocket. The active-site Acyl-thioester intermediate is Cys135. Residue Gln162 coordinates substrate. NADP(+)-binding positions include 165–166 (SG) and Pro193. Residue Glu241 participates in substrate binding. Lys244 contacts phosphate. Arg268 provides a ligand contact to substrate. The active-site Proton acceptor is His275. Residue Gln351 coordinates NADP(+).

Belongs to the aspartate-semialdehyde dehydrogenase family. In terms of assembly, homodimer.

The enzyme catalyses L-aspartate 4-semialdehyde + phosphate + NADP(+) = 4-phospho-L-aspartate + NADPH + H(+). It participates in amino-acid biosynthesis; L-lysine biosynthesis via DAP pathway; (S)-tetrahydrodipicolinate from L-aspartate: step 2/4. It functions in the pathway amino-acid biosynthesis; L-methionine biosynthesis via de novo pathway; L-homoserine from L-aspartate: step 2/3. Its pathway is amino-acid biosynthesis; L-threonine biosynthesis; L-threonine from L-aspartate: step 2/5. Its function is as follows. Catalyzes the NADPH-dependent formation of L-aspartate-semialdehyde (L-ASA) by the reductive dephosphorylation of L-aspartyl-4-phosphate. In Neisseria meningitidis serogroup A / serotype 4A (strain DSM 15465 / Z2491), this protein is Aspartate-semialdehyde dehydrogenase.